The primary structure comprises 46 residues: Protein PsbN (46 aa).

The helical transmembrane segment at 10–30 (IAITILIVLLGLTAFGVYTAF) threads the bilayer.

It belongs to the PsbN family.

The protein resides in the cellular thylakoid membrane. May play a role in photosystem I and II biogenesis. This chain is Protein PsbN, found in Prochlorococcus marinus (strain SARG / CCMP1375 / SS120).